Here is a 103-residue protein sequence, read N- to C-terminus: Small ribosomal subunit protein bS6c (103 aa).

The protein belongs to the bacterial ribosomal protein bS6 family.

The protein resides in the plastid. It is found in the chloroplast. Its function is as follows. Binds together with bS18 to 16S ribosomal RNA. The polypeptide is Small ribosomal subunit protein bS6c (rps6) (Cyanidium caldarium (Red alga)).